A 736-amino-acid chain; its full sequence is Elongation factor 2 (736 aa).

Positions 18 to 261 (EQIRNIGITA…MVVKHIPNPR (244 aa)) constitute a tr-type G domain. GTP is bound by residues 27–34 (AHVDHGKT), 93–97 (DTPGH), and 147–150 (NKID). Position 602 is a diphthamide (His602).

The protein belongs to the TRAFAC class translation factor GTPase superfamily. Classic translation factor GTPase family. EF-G/EF-2 subfamily.

It localises to the cytoplasm. In terms of biological role, catalyzes the GTP-dependent ribosomal translocation step during translation elongation. During this step, the ribosome changes from the pre-translocational (PRE) to the post-translocational (POST) state as the newly formed A-site-bound peptidyl-tRNA and P-site-bound deacylated tRNA move to the P and E sites, respectively. Catalyzes the coordinated movement of the two tRNA molecules, the mRNA and conformational changes in the ribosome. This chain is Elongation factor 2, found in Desulfurococcus amylolyticus (strain DSM 18924 / JCM 16383 / VKM B-2413 / 1221n) (Desulfurococcus kamchatkensis).